The chain runs to 253 residues: Probable transcriptional regulatory protein Synpcc7942_1017 (253 aa).

The protein belongs to the TACO1 family.

It localises to the cytoplasm. This is Probable transcriptional regulatory protein Synpcc7942_1017 from Synechococcus elongatus (strain ATCC 33912 / PCC 7942 / FACHB-805) (Anacystis nidulans R2).